Here is a 299-residue protein sequence, read N- to C-terminus: Ciliary microtubule inner protein 2B (299 aa).

This sequence belongs to the CIMIP2 family. In terms of tissue distribution, expressed in airway epithelial cells.

It is found in the cytoplasm. It localises to the cytoskeleton. The protein resides in the cilium axoneme. Its function is as follows. Microtubule inner protein (MIP) part of the dynein-decorated doublet microtubules (DMTs) in cilia axoneme, which is required for motile cilia beating. This chain is Ciliary microtubule inner protein 2B (cimip2b), found in Danio rerio (Zebrafish).